We begin with the raw amino-acid sequence, 689 residues long: Glycine--tRNA ligase beta subunit (689 aa).

Belongs to the class-II aminoacyl-tRNA synthetase family. In terms of assembly, tetramer of two alpha and two beta subunits.

The protein resides in the cytoplasm. The catalysed reaction is tRNA(Gly) + glycine + ATP = glycyl-tRNA(Gly) + AMP + diphosphate. This Coxiella burnetii (strain RSA 493 / Nine Mile phase I) protein is Glycine--tRNA ligase beta subunit (glyS).